Consider the following 71-residue polypeptide: Calcium dodecin (71 aa).

Residue Glu18 participates in Ca(2+) binding.

It belongs to the dodecin family. As to quaternary structure, homododecamer; 12 subunits assemble to form a hollow sphere with a diameter of about 75 Angstroms. Calcium ions are bound at the interface between three subunits.

Functionally, binds calcium ions. May play a role in sequestering additional small ligands. In Mycobacterium tuberculosis (strain ATCC 25618 / H37Rv), this protein is Calcium dodecin (secE2).